The sequence spans 539 residues: Protein pim1 (539 aa).

The tract at residues 1-53 (MTSNRSTRSSTKREEVSKNGVEKRELDESDVMKNGKKPVKRAKVSSLPKPVRV) is disordered. Residues 11-33 (TKREEVSKNGVEKRELDESDVMK) are compositionally biased toward basic and acidic residues. Over residues 34–43 (NGKKPVKRAK) the composition is skewed to basic residues. 7 RCC1 repeats span residues 70 to 125 (RLNV…ALSH), 127 to 191 (GRVY…AITD), 192 to 243 (NGCC…ALTT), 244 to 296 (TGKV…AIDN), 298 to 353 (GRVY…ALLE), 354 to 417 (DGRV…AVTS), and 419 to 472 (GKVY…IAGI). The segment at 478-539 (EPVANGIKSE…SVLEPSSTTA (62 aa)) is disordered. A compositionally biased stretch (basic and acidic residues) spans 486–504 (SEPENEKKLKTEETSKTDD). The segment covering 514 to 525 (VTSNGEPSTATS) has biased composition (polar residues).

Oligomer of dis3, pim1 and spi1. Interacts with ned1.

The protein resides in the nucleus. Functionally, promotes the exchange of Ran(spi1)-bound GDP by GTP. Involved in the control of mitosis. Regulates a variety of nuclear events, including mitotic check-point, chromosome decondensation and mRNA processing/transport. The protein is Protein pim1 (pim1) of Schizosaccharomyces pombe (strain 972 / ATCC 24843) (Fission yeast).